We begin with the raw amino-acid sequence, 247 residues long: MTILFLTMVISYFGCMKAAPMKEANVRGQGSLAYTGVRTHGTLESMNGPKAGSRGLTSLADTFEHVIEELLDEDQKVRPNEENNKDADLYTSRVMLSSQVPLEPPLLFLLEEYKNYLDAANMSMRVRRHSDPARRGELSVCDSISEWVTAADKKTAVDMSGGTVTVLEKVPVSKGQLKQYFYETKCNPMGYTKEGCRGIDKRHWNSQCRTTQSYVRALTMDSKKRIGWRFIRIDTSCVCTLTIKRGR.

The first 18 residues, 1–18 (MTILFLTMVISYFGCMKA), serve as a signal peptide directing secretion. A propeptide spanning residues 19-128 (APMKEANVRG…AANMSMRVRR (110 aa)) is cleaved from the precursor. N-linked (GlcNAc...) asparagine glycosylation is present at N121. 3 disulfide bridges follow: C141-C208, C186-C237, and C196-C239.

It belongs to the NGF-beta family. As to quaternary structure, monomers and homodimers. Binds to NTRK2/TRKB. Can form heterodimers with other neurotrophin family members, such as NTF3 and NTF4 (in vitro), but the physiological relevance of this is not clear. BDNF precursor form: interacts with the heterodimer formed by NGFR and SORCS2. Mature BDNF has much lower affinity for the heterodimer formed by NGFR and SORCS2. N-glycosylated and glycosulfated, contrary to mature BDNF. In terms of processing, mature BDNF is produced by proteolytic removal of the propeptide, catalyzed by a FURIN family member. In addition, the precursor form is proteolytically cleaved within the propeptide, but this is not an obligatory intermediate for the production of mature BDNF. Can be converted into mature BDNF by plasmin (PLG).

The protein resides in the secreted. Its function is as follows. Important signaling molecule that activates signaling cascades downstream of NTRK2. During development, promotes the survival and differentiation of selected neuronal populations of the peripheral and central nervous systems. Participates in axonal growth, pathfinding and in the modulation of dendritic growth and morphology. Major regulator of synaptic transmission and plasticity at adult synapses in many regions of the CNS. The versatility of BDNF is emphasized by its contribution to a range of adaptive neuronal responses including long-term potentiation (LTP), long-term depression (LTD), certain forms of short-term synaptic plasticity, as well as homeostatic regulation of intrinsic neuronal excitability. Functionally, important signaling molecule that activates signaling cascades downstream of NTRK2. Activates signaling cascades via the heterodimeric receptor formed by NGFR and SORCS2. Signaling via NGFR and SORCS2 plays a role in synaptic plasticity and long-term depression (LTD). Binding to NGFR and SORCS2 promotes neuronal apoptosis. Promotes neuronal growth cone collapse. The sequence is that of Neurotrophic factor BDNF precursor form (BDNF) from Ailurus fulgens (Himalayan red panda).